Here is a 384-residue protein sequence, read N- to C-terminus: Stress response protein bis1 (384 aa).

2 disordered regions span residues 1-22 and 344-384; these read MSLAKKIDDDEKQLVKPVNKEQ and SPLH…PKRV.

This sequence belongs to the ESS2 family. As to quaternary structure, heterodimer with ish1.

It is found in the nucleus. The protein resides in the cytoplasm. Its subcellular location is the cytoskeleton. The protein localises to the spindle. Functionally, has a role in maintaining cell viability during stationary phase induced by stress response. May be involved in pre-mRNA splicing. The polypeptide is Stress response protein bis1 (bis1) (Schizosaccharomyces pombe (strain 972 / ATCC 24843) (Fission yeast)).